The chain runs to 113 residues: Carboxysome shell protein CcmK4 (113 aa).

Residues 5 to 91 (AIGSLETKGF…PHENVEAVFP (87 aa)) form the BMC domain.

It belongs to the bacterial microcompartments protein family. CcmK subfamily. In terms of assembly, homohexamer. Interacts stably with CcmK3, probably forms heterohexamers with a 1:2 CcmK3:CcmK4 stoichiometry.

The protein resides in the carboxysome. In terms of biological role, one of the shell proteins of the carboxysome, a polyhedral inclusion where RuBisCO (ribulose bisphosphate carboxylase, rbcL-rbcS) is sequestered. Assembles into hexamers which make sheets that form the facets of the polyhedral carboxysome. The hexamer central pore probably regulates metabolite flux. Its function is as follows. A minor shell protein of the carboxysome, a polyhedral inclusion where RuBisCO (ribulose bisphosphate carboxylase, rbcL-rbcS) is sequestered. Hexamers form sheets that form the facets of the polyhedral carboxysome. The shell is 4.5 nm thick, as observed for CcmK proteins. In PCC 7942 there are several CcmK paralogs with presumably functional differences; replacing the central pore residues (34-37) with those of CcmK2 from this organism (Tyr-Glu-Lys-Ile) allows the bacterium to make carboxysomes, but the expression level is too low to know if the carboxysome is functional for CO(2) fixation. This subunit probably makes both homohexamers and heterohexamers with CcmK3. The CcmK3-CcmK4 heterohexmers have been suggested to cap other hexamers, perhaps to alter metabolite flux. The sequence is that of Carboxysome shell protein CcmK4 from Synechococcus elongatus (strain ATCC 33912 / PCC 7942 / FACHB-805) (Anacystis nidulans R2).